The primary structure comprises 181 residues: Adenylyl-sulfate kinase (181 aa).

12 to 19 contacts ATP; it reads GLSGAGKT. S86 functions as the Phosphoserine intermediate in the catalytic mechanism.

It belongs to the APS kinase family.

It catalyses the reaction adenosine 5'-phosphosulfate + ATP = 3'-phosphoadenylyl sulfate + ADP + H(+). It functions in the pathway sulfur metabolism; hydrogen sulfide biosynthesis; sulfite from sulfate: step 2/3. In terms of biological role, catalyzes the synthesis of activated sulfate. The chain is Adenylyl-sulfate kinase from Rippkaea orientalis (strain PCC 8801 / RF-1) (Cyanothece sp. (strain PCC 8801)).